We begin with the raw amino-acid sequence, 225 residues long: MGFFITFEGIEGCGKTTQLRLLKERLEAAGEKVTVTREPGGCPVADQMRAILLDAKNSAITPLAELLLYAAARAQHVQEVIVPALERGETVLCDRFTDATVAYQGHGRGLDLTVIEELNTLATGRVQPALTVLIDCPVEVGLSRALARIEATSGAKEERFERESLLFHQKVRNGYLTLAAAFPERFVVVDGSGDVRQTGLLVAEALRQRMQSLGKAGLAAVKAGC.

9-16 is an ATP binding site; it reads GIEGCGKT.

Belongs to the thymidylate kinase family.

It carries out the reaction dTMP + ATP = dTDP + ADP. In terms of biological role, phosphorylation of dTMP to form dTDP in both de novo and salvage pathways of dTTP synthesis. In Citrifermentans bemidjiense (strain ATCC BAA-1014 / DSM 16622 / JCM 12645 / Bem) (Geobacter bemidjiensis), this protein is Thymidylate kinase.